The chain runs to 196 residues: MSDENPLQPPWLNAPPVDPYPYEESHDLRTGPKLHPALDGLLPYVGVWRGRGRGGYPTIEDFDYGQEIRISHDGRPFLCYESRAWLLDEQSRPIRPAGREMGWWRPVLAGDRATGEWEALMTTPTGVMELHLGKRTGTQLEFATDAVVRTPTAKEVTAGHRLFGIVEGALLYAQEMAAVGHGLTPHLSARLIRVGG.

Positions 1-29 (MSDENPLQPPWLNAPPVDPYPYEESHDLR) are disordered. Pro residues predominate over residues 7–19 (LQPPWLNAPPVDP). The GXWXGXG motif lies at 46-52 (GVWRGRG). Histidine 186 is a binding site for heme b.

This sequence belongs to the nitrobindin family. As to quaternary structure, homodimer. Requires heme b as cofactor.

The enzyme catalyses peroxynitrite = nitrate. The protein operates within nitrogen metabolism. In terms of biological role, heme-binding protein able to scavenge peroxynitrite and to protect free L-tyrosine against peroxynitrite-mediated nitration, by acting as a peroxynitrite isomerase that converts peroxynitrite to nitrate. Therefore, this protein likely plays a role in peroxynitrite sensing and in the detoxification of reactive nitrogen and oxygen species (RNS and ROS, respectively). Is able to bind nitric oxide (NO) in vitro, but may act as a sensor of peroxynitrite levels in vivo. The polypeptide is Peroxynitrite isomerase (Salinispora arenicola (strain CNS-205)).